Consider the following 331-residue polypeptide: Betaine-homocysteine S-methyltransferase (331 aa).

The Hcy-binding domain maps to 3 to 324 (VNQKWNWDTK…TDVLAIRKYV (322 aa)). Zn(2+)-binding residues include Cys-243, Cys-309, and Cys-310.

The protein belongs to the Betaine-homocysteine S-methyltransferase, BHMT family. Zn(2+) serves as cofactor.

The enzyme catalyses L-homocysteine + glycine betaine = N,N-dimethylglycine + L-methionine. It functions in the pathway amino-acid biosynthesis; L-methionine biosynthesis via de novo pathway. Functionally, involved in the regulation of homocysteine metabolism. Converts betaine and homocysteine to dimethylglycine and methionine, respectively. The sequence is that of Betaine-homocysteine S-methyltransferase from Drosophila melanogaster (Fruit fly).